We begin with the raw amino-acid sequence, 100 residues long: Aspartyl/glutamyl-tRNA(Asn/Gln) amidotransferase subunit C (100 aa).

It belongs to the GatC family. As to quaternary structure, heterotrimer of A, B and C subunits.

It catalyses the reaction L-glutamyl-tRNA(Gln) + L-glutamine + ATP + H2O = L-glutaminyl-tRNA(Gln) + L-glutamate + ADP + phosphate + H(+). The catalysed reaction is L-aspartyl-tRNA(Asn) + L-glutamine + ATP + H2O = L-asparaginyl-tRNA(Asn) + L-glutamate + ADP + phosphate + 2 H(+). In terms of biological role, allows the formation of correctly charged Asn-tRNA(Asn) or Gln-tRNA(Gln) through the transamidation of misacylated Asp-tRNA(Asn) or Glu-tRNA(Gln) in organisms which lack either or both of asparaginyl-tRNA or glutaminyl-tRNA synthetases. The reaction takes place in the presence of glutamine and ATP through an activated phospho-Asp-tRNA(Asn) or phospho-Glu-tRNA(Gln). In Rickettsia bellii (strain RML369-C), this protein is Aspartyl/glutamyl-tRNA(Asn/Gln) amidotransferase subunit C.